A 322-amino-acid chain; its full sequence is N-acetyl-gamma-glutamyl-phosphate reductase (322 aa).

Cysteine 132 is an active-site residue.

The protein belongs to the NAGSA dehydrogenase family. Type 1 subfamily.

It is found in the cytoplasm. It carries out the reaction N-acetyl-L-glutamate 5-semialdehyde + phosphate + NADP(+) = N-acetyl-L-glutamyl 5-phosphate + NADPH + H(+). It functions in the pathway amino-acid biosynthesis; L-arginine biosynthesis; N(2)-acetyl-L-ornithine from L-glutamate: step 3/4. Its function is as follows. Catalyzes the NADPH-dependent reduction of N-acetyl-5-glutamyl phosphate to yield N-acetyl-L-glutamate 5-semialdehyde. The protein is N-acetyl-gamma-glutamyl-phosphate reductase of Phocaeicola vulgatus (strain ATCC 8482 / DSM 1447 / JCM 5826 / CCUG 4940 / NBRC 14291 / NCTC 11154) (Bacteroides vulgatus).